A 639-amino-acid polypeptide reads, in one-letter code: Bucky ball (639 aa).

Positions Ala-178 to Val-187 are enriched in basic and acidic residues. Disordered regions lie at residues Ala-178–Gly-205, Leu-218–Thr-242, and Arg-581–Tyr-614. A compositionally biased stretch (polar residues) spans Arg-189–Gly-205. A compositionally biased stretch (acidic residues) spans Glu-225–Pro-240. Positions Arg-584–Gly-593 are enriched in polar residues. Positions Pro-596 to Arg-609 are enriched in basic residues. 2 positions are modified to symmetric dimethylarginine: Arg-627 and Arg-629. 3 consecutive short sequence motifs (RG Motif) follow at residues Arg-627 to Gly-628, Arg-629 to Gly-630, and Arg-635 to Gly-636.

Specifically interacts (when methylated) with tdrd6 (via Tudor domain); interaction is responsible for recruitment of different protein complexes to germ plasm. Interacts with rbpms2 and dazl; interaction mediates Balbiani body formation. Interacts with kif5ba; interaction leads to buc enrichment at the embryonic cleavage furrows and mediates dorsoventral patterning. Symmetric dimethylarginine modification promotes interaction with tdrd6.

It localises to the cytoplasm. Its subcellular location is the cleavage furrow. Functionally, prion-like protein required for the formation of Balbiani body (electron-dense aggregates in the oocyte) and germ plasm assembly, and for the establishment of oocyte polarity during early oogenesis. Mobility and aggregation properties are improved by tudor domain-containing protein tdrd6 through interaction with dimethylated arginines Tri-RG domains. Establishes oocyte polarity through interactions with RNA-binding proteins rbpms2 and dazl, initiating a positive feedback loop amplification mechanism in the Balbiani body. Interaction of BUC protein and mRNA with rbpms2 and dazl is required to mediate Balbiani body formation. Involved in recruitment of germ plasm to embryonic cleavage furrows and dorsoventral patterning through interaction with Kinesin-1/KIF5BA. In Danio rerio (Zebrafish), this protein is Bucky ball.